A 355-amino-acid polypeptide reads, in one-letter code: DNA polymerase IV (355 aa).

The UmuC domain occupies 4-185 (IIHIDMDCYF…LSLGKIPGVG (182 aa)). The Mg(2+) site is built by aspartate 8 and aspartate 103. The active site involves glutamate 104.

The protein belongs to the DNA polymerase type-Y family. As to quaternary structure, monomer. It depends on Mg(2+) as a cofactor.

Its subcellular location is the cytoplasm. It carries out the reaction DNA(n) + a 2'-deoxyribonucleoside 5'-triphosphate = DNA(n+1) + diphosphate. Poorly processive, error-prone DNA polymerase involved in untargeted mutagenesis. Copies undamaged DNA at stalled replication forks, which arise in vivo from mismatched or misaligned primer ends. These misaligned primers can be extended by PolIV. Exhibits no 3'-5' exonuclease (proofreading) activity. May be involved in translesional synthesis, in conjunction with the beta clamp from PolIII. The polypeptide is DNA polymerase IV (Shewanella amazonensis (strain ATCC BAA-1098 / SB2B)).